The primary structure comprises 294 residues: ATP synthase gamma chain (294 aa).

It belongs to the ATPase gamma chain family. As to quaternary structure, F-type ATPases have 2 components, CF(1) - the catalytic core - and CF(0) - the membrane proton channel. CF(1) has five subunits: alpha(3), beta(3), gamma(1), delta(1), epsilon(1). CF(0) has three main subunits: a, b and c.

It localises to the cell inner membrane. Functionally, produces ATP from ADP in the presence of a proton gradient across the membrane. The gamma chain is believed to be important in regulating ATPase activity and the flow of protons through the CF(0) complex. The protein is ATP synthase gamma chain of Rhizorhabdus wittichii (strain DSM 6014 / CCUG 31198 / JCM 15750 / NBRC 105917 / EY 4224 / RW1) (Sphingomonas wittichii).